We begin with the raw amino-acid sequence, 183 residues long: ATP-dependent protease subunit HslV (183 aa).

Thr13 is a catalytic residue. Gly168, Cys171, and Thr174 together coordinate Na(+).

Belongs to the peptidase T1B family. HslV subfamily. As to quaternary structure, a double ring-shaped homohexamer of HslV is capped on each side by a ring-shaped HslU homohexamer. The assembly of the HslU/HslV complex is dependent on binding of ATP.

The protein resides in the cytoplasm. It catalyses the reaction ATP-dependent cleavage of peptide bonds with broad specificity.. Allosterically activated by HslU binding. Functionally, protease subunit of a proteasome-like degradation complex believed to be a general protein degrading machinery. This is ATP-dependent protease subunit HslV from Xanthomonas campestris pv. campestris (strain ATCC 33913 / DSM 3586 / NCPPB 528 / LMG 568 / P 25).